The primary structure comprises 225 residues: Ribonuclease HII (225 aa).

Positions 35 to 225 (GLVAGVDEVG…SFRPCQISPD (191 aa)) constitute an RNase H type-2 domain. A divalent metal cation is bound by residues Asp-41, Glu-42, and Asp-137.

Belongs to the RNase HII family. The cofactor is Mn(2+). Mg(2+) serves as cofactor.

The protein localises to the cytoplasm. The enzyme catalyses Endonucleolytic cleavage to 5'-phosphomonoester.. Endonuclease that specifically degrades the RNA of RNA-DNA hybrids. This chain is Ribonuclease HII, found in Nostoc sp. (strain PCC 7120 / SAG 25.82 / UTEX 2576).